Consider the following 157-residue polypeptide: Transcription elongation factor GreA (157 aa).

Residues 10-76 (THEGKQKLEQ…TLENMIRNAK (67 aa)) are a coiled coil.

Belongs to the GreA/GreB family.

Necessary for efficient RNA polymerase transcription elongation past template-encoded arresting sites. The arresting sites in DNA have the property of trapping a certain fraction of elongating RNA polymerases that pass through, resulting in locked ternary complexes. Cleavage of the nascent transcript by cleavage factors such as GreA or GreB allows the resumption of elongation from the new 3'terminus. GreA releases sequences of 2 to 3 nucleotides. The protein is Transcription elongation factor GreA of Bacillus velezensis (strain DSM 23117 / BGSC 10A6 / LMG 26770 / FZB42) (Bacillus amyloliquefaciens subsp. plantarum).